Reading from the N-terminus, the 220-residue chain is Deoxyribose-phosphate aldolase (220 aa).

Asp92 acts as the Proton donor/acceptor in catalysis. Catalysis depends on Lys155, which acts as the Schiff-base intermediate with acetaldehyde. Lys184 serves as the catalytic Proton donor/acceptor.

The protein belongs to the DeoC/FbaB aldolase family. DeoC type 1 subfamily.

The protein resides in the cytoplasm. It catalyses the reaction 2-deoxy-D-ribose 5-phosphate = D-glyceraldehyde 3-phosphate + acetaldehyde. It functions in the pathway carbohydrate degradation; 2-deoxy-D-ribose 1-phosphate degradation; D-glyceraldehyde 3-phosphate and acetaldehyde from 2-deoxy-alpha-D-ribose 1-phosphate: step 2/2. In terms of biological role, catalyzes a reversible aldol reaction between acetaldehyde and D-glyceraldehyde 3-phosphate to generate 2-deoxy-D-ribose 5-phosphate. The chain is Deoxyribose-phosphate aldolase from Natranaerobius thermophilus (strain ATCC BAA-1301 / DSM 18059 / JW/NM-WN-LF).